The following is a 192-amino-acid chain: Xanthine phosphoribosyltransferase (192 aa).

2 residues coordinate xanthine: Leu-20 and Asn-27. 128-132 contributes to the 5-phospho-alpha-D-ribose 1-diphosphate binding site; the sequence is AQGEA. Lys-156 contacts xanthine.

This sequence belongs to the purine/pyrimidine phosphoribosyltransferase family. Xpt subfamily. As to quaternary structure, homodimer.

Its subcellular location is the cytoplasm. The enzyme catalyses XMP + diphosphate = xanthine + 5-phospho-alpha-D-ribose 1-diphosphate. The protein operates within purine metabolism; XMP biosynthesis via salvage pathway; XMP from xanthine: step 1/1. Functionally, converts the preformed base xanthine, a product of nucleic acid breakdown, to xanthosine 5'-monophosphate (XMP), so it can be reused for RNA or DNA synthesis. This chain is Xanthine phosphoribosyltransferase, found in Lactobacillus helveticus (strain DPC 4571).